The sequence spans 194 residues: Large ribosomal subunit protein eL15 (194 aa).

Residues 165–194 (AGKKGRGLRNKGKGAEKVRPSIRANEGKGK) form a disordered region. Positions 167–176 (KKGRGLRNKG) are enriched in basic residues. Residues 177–194 (KGAEKVRPSIRANEGKGK) are compositionally biased toward basic and acidic residues.

It belongs to the eukaryotic ribosomal protein eL15 family. Part of the 50S ribosomal subunit.

In Pyrococcus furiosus (strain ATCC 43587 / DSM 3638 / JCM 8422 / Vc1), this protein is Large ribosomal subunit protein eL15.